The chain runs to 243 residues: 2-C-methyl-D-erythritol 4-phosphate cytidylyltransferase (243 aa).

Belongs to the IspD/TarI cytidylyltransferase family. IspD subfamily. As to quaternary structure, homodimer.

The catalysed reaction is 2-C-methyl-D-erythritol 4-phosphate + CTP + H(+) = 4-CDP-2-C-methyl-D-erythritol + diphosphate. The protein operates within isoprenoid biosynthesis; isopentenyl diphosphate biosynthesis via DXP pathway; isopentenyl diphosphate from 1-deoxy-D-xylulose 5-phosphate: step 2/6. Functionally, catalyzes the formation of 4-diphosphocytidyl-2-C-methyl-D-erythritol from CTP and 2-C-methyl-D-erythritol 4-phosphate (MEP). This chain is 2-C-methyl-D-erythritol 4-phosphate cytidylyltransferase, found in Photorhabdus laumondii subsp. laumondii (strain DSM 15139 / CIP 105565 / TT01) (Photorhabdus luminescens subsp. laumondii).